Here is a 300-residue protein sequence, read N- to C-terminus: ClpXP adapter protein SpxH (300 aa).

It belongs to the SpxH family. Interacts with Spx.

It localises to the cytoplasm. Adapter protein required for efficient degradation of Spx by ClpXP under non-stress conditions. Interaction with Spx stabilizes Spx and exposes the C-terminus of Spx for recognition and proteolysis by ClpXP. This Bacillus licheniformis (strain ATCC 14580 / DSM 13 / JCM 2505 / CCUG 7422 / NBRC 12200 / NCIMB 9375 / NCTC 10341 / NRRL NRS-1264 / Gibson 46) protein is ClpXP adapter protein SpxH.